The chain runs to 487 residues: Probable Xaa-Pro aminopeptidase CPSG_02684 (487 aa).

Residues 1–10 (MAGSNTLSSS) show a composition bias toward polar residues. The disordered stretch occupies residues 1–22 (MAGSNTLSSSEHGDDPRGHSYS). Residues Asp275, Asp286, Glu421, and Glu460 each coordinate Mn(2+).

Belongs to the peptidase M24B family. Requires Mn(2+) as cofactor.

The enzyme catalyses Release of any N-terminal amino acid, including proline, that is linked to proline, even from a dipeptide or tripeptide.. Its function is as follows. Catalyzes the removal of a penultimate prolyl residue from the N-termini of peptides. The protein is Probable Xaa-Pro aminopeptidase CPSG_02684 of Coccidioides posadasii (strain RMSCC 757 / Silveira) (Valley fever fungus).